The following is a 92-amino-acid chain: Integration host factor subunit beta (92 aa).

Belongs to the bacterial histone-like protein family. Heterodimer of an alpha and a beta chain.

Functionally, this protein is one of the two subunits of integration host factor, a specific DNA-binding protein that functions in genetic recombination as well as in transcriptional and translational control. The chain is Integration host factor subunit beta from Bartonella tribocorum (strain CIP 105476 / IBS 506).